Here is a 260-residue protein sequence, read N- to C-terminus: LOB domain-containing protein 6 (260 aa).

Residues 32–133 (SPCAACKFLR…QDLARAKYEL (102 aa)) form the LOB domain.

It belongs to the LOB domain-containing protein family. In terms of assembly, interacts with RS2. In terms of tissue distribution, expressed in leaves, leaf primordia, immature ears, immature tassels, whole ovules, silk and husk leaves. Found on the adaxial side of organs.

It is found in the nucleus. In terms of biological role, promotes the switch from proliferation to differentiation in the embryo sac. Negative regulator of cell proliferation in the adaxial side of leaves. Regulates the formation of a symmetric lamina and the establishment of venation. Interacts directly with RS2 (rough sheath 2) to repress some knox homeobox genes. This is LOB domain-containing protein 6 (LBD6) from Zea mays (Maize).